Here is a 199-residue protein sequence, read N- to C-terminus: Large ribosomal subunit protein uL4 (199 aa).

The protein belongs to the universal ribosomal protein uL4 family. Part of the 50S ribosomal subunit.

Its function is as follows. One of the primary rRNA binding proteins, this protein initially binds near the 5'-end of the 23S rRNA. It is important during the early stages of 50S assembly. It makes multiple contacts with different domains of the 23S rRNA in the assembled 50S subunit and ribosome. Functionally, forms part of the polypeptide exit tunnel. The protein is Large ribosomal subunit protein uL4 of Aquifex aeolicus (strain VF5).